The primary structure comprises 240 residues: ATP synthase subunit a (240 aa).

Helical transmembrane passes span 21–41 (LSSM…AMLF), 83–103 (AVTL…FAII), 116–136 (DPTV…FYGV), 184–204 (LLGL…GAAI), and 207–227 (LIWQ…FVML).

It belongs to the ATPase A chain family. In terms of assembly, F-type ATPases have 2 components, CF(1) - the catalytic core - and CF(0) - the membrane proton channel. CF(1) has five subunits: alpha(3), beta(3), gamma(1), delta(1), epsilon(1). CF(0) has three main subunits: a(1), b(2) and c(9-12). The alpha and beta chains form an alternating ring which encloses part of the gamma chain. CF(1) is attached to CF(0) by a central stalk formed by the gamma and epsilon chains, while a peripheral stalk is formed by the delta and b chains.

The protein resides in the cell membrane. Key component of the proton channel; it plays a direct role in the translocation of protons across the membrane. This chain is ATP synthase subunit a, found in Macrococcus caseolyticus (strain JCSC5402) (Macrococcoides caseolyticum).